Consider the following 538-residue polypeptide: Dolichol kinase (538 aa).

The Lumenal portion of the chain corresponds to 1–13 (MTRECPSPAPGPG). Residues 14-34 (APLSGSVLAEAAVVFAVVLSI) form a helical membrane-spanning segment. Residues 35-74 (HATVWDRYSWCAVALAVQAFYVQYKWDRLLQQGSAVFQFR) are Cytoplasmic-facing. The helical transmembrane segment at 75-95 (MSANSGLLPASMVMPLLGLVM) threads the bilayer. Residues 96-111 (KERCQTAGNPFFERFG) lie on the Lumenal side of the membrane. Residues 112–132 (IVVAATGMAVALFSSVLALGI) traverse the membrane as a helical segment. Over 133–134 (TR) the chain is Cytoplasmic. The helical transmembrane segment at 135 to 155 (PVPTNTCVILGLAGGVIIYIM) threads the bilayer. Over 156–163 (KHSLSVGE) the chain is Lumenal. A helical transmembrane segment spans residues 164 to 184 (VIEVLEVLLIFVYLNMILLYL). Over 185–188 (LPRC) the chain is Cytoplasmic. Residues 189-209 (FTPGEALLVLGGISFVLNQLI) traverse the membrane as a helical segment. The Lumenal portion of the chain corresponds to 210-224 (KRSLTLVESQGDPVD). The helical transmembrane segment at 225-245 (FFLLVVVVGMVLMGIFFSTLF) threads the bilayer. Residues 246 to 254 (VFMDSGTWA) lie on the Cytoplasmic side of the membrane. Residues 255-275 (SSIFFHLMTCVLSLGVVLPWL) form a helical membrane-spanning segment. Over 276–297 (HRLIRRNPLLWLLQFLFQTDTR) the chain is Lumenal. A helical membrane pass occupies residues 298-318 (IYLLAYWSLLATLACLVVLYQ). Residues 319–337 (NAKRSSSESKKHQAPTIAR) are Cytoplasmic-facing. Residues 338–354 (KYFHLIVVATYIPGIIF) form a helical membrane-spanning segment. Residues 355–359 (DRPLL) lie on the Lumenal side of the membrane. A helical membrane pass occupies residues 360 to 380 (YVAATVCLAVFIFLEYVRYFR). Topologically, residues 381–401 (IKPLGHTLRSFLSLFLDERDS) are cytoplasmic. The helical transmembrane segment at 402 to 422 (GPLILTHIYLLLGMSLPIWLI) threads the bilayer. Topologically, residues 423-436 (PRPCTQKGSLGGAR) are lumenal. Residues 437-457 (ALVPYAGVLAVGVGDTVASIF) form a helical membrane-spanning segment. Over 458–472 (GSTMGEIRWPGTKKT) the chain is Cytoplasmic. The interval 459–474 (STMGEIRWPGTKKTFE) is CTP-binding. A helical transmembrane segment spans residues 473 to 493 (FEGTMTSIFAQIISVALILIF). Topologically, residues 494–495 (DS) are lumenal. Residues 496-516 (GVDLNYSYAWILGSISTVSLL) form a helical membrane-spanning segment. Residues 517–538 (EAYTTQIDNLLLPLYLLILLMA) lie on the Cytoplasmic side of the membrane.

The protein belongs to the polyprenol kinase family. Ubiquitous.

It localises to the endoplasmic reticulum membrane. The catalysed reaction is a di-trans,poly-cis-dolichol + CTP = a di-trans,poly-cis-dolichyl phosphate + CDP + H(+). The protein operates within protein modification; protein glycosylation. Catalyzes CTP-mediated phosphorylation of dolichol, the terminal step in de novo dolichyl monophosphate (Dol-P) biosynthesis. Dol-P is a lipid carrier essential for the synthesis of N-linked and O-linked oligosaccharides and for GPI anchors. The chain is Dolichol kinase (DOLK) from Homo sapiens (Human).